We begin with the raw amino-acid sequence, 608 residues long: RAS guanyl-releasing protein 2 (608 aa).

The region spanning 4 to 126 (TLDLDKGCTV…SLIDIENVPT (123 aa)) is the N-terminal Ras-GEF domain. Residues S116, S117, and S147 each carry the phosphoserine modification. The region spanning 154–387 (EPLELAAHLT…YQLSLQREPR (234 aa)) is the Ras-GEF domain. The interval 382–407 (LQREPRSKSSPTSPTTCTPPPRPPVL) is disordered. 2 consecutive EF-hand domains span residues 426-461 (HIEKMVESVFRNFDVDGDGHISQEEFQIIRGNFPYL) and 463-490 (AFGDLDQNQDGCISKEEMVSYFLRSSSM). The Ca(2+) site is built by D439, D441, D443, H445, E450, D468, N470, D472, C474, and E479. Residues 498 to 548 (VHNFHESNSLRPVACRHCKALILGIYKQGLKCRACGVNCHKQCKDRLSVEC) form a Phorbol-ester/DAG-type zinc finger. Residues S554 and S575 each carry the phosphoserine modification. The segment at 556–591 (SLEGSAPSPSPTHTHHRAFSFSLPRPGRRGSRPPEI) is disordered.

This sequence belongs to the RASGRP family. As to quaternary structure, forms a signaling complex with RAP1 and BRAF. Interacts with RAP1. Interacts with F-actin.

It localises to the cytoplasm. Its subcellular location is the cytosol. It is found in the cell membrane. The protein localises to the synapse. The protein resides in the synaptosome. It localises to the cell projection. Its subcellular location is the ruffle membrane. Functionally, functions as a calcium- and DAG-regulated nucleotide exchange factor specifically activating Rap through the exchange of bound GDP for GTP. May also activate other GTPases such as RRAS, RRAS2, NRAS, KRAS but not HRAS. Functions in aggregation of platelets and adhesion of T-lymphocytes and neutrophils probably through inside-out integrin activation. May function in the muscarinic acetylcholine receptor M1/CHRM1 signaling pathway. In Bos taurus (Bovine), this protein is RAS guanyl-releasing protein 2 (RASGRP2).